We begin with the raw amino-acid sequence, 77 residues long: Conotoxin Vc6b (77 aa).

The N-terminal stretch at methionine 1–alanine 22 is a signal peptide. A propeptide spanning residues aspartate 23–asparagine 47 is cleaved from the precursor. Disulfide bonds link cysteine 52–cysteine 66, cysteine 59–cysteine 72, and cysteine 67–cysteine 76.

As to expression, expressed by the venom duct.

It localises to the secreted. The chain is Conotoxin Vc6b from Conus victoriae (Queen Victoria cone).